Here is a 263-residue protein sequence, read N- to C-terminus: H-2 class II histocompatibility antigen, A-U beta chain (263 aa).

An N-terminal signal peptide occupies residues 1–27 (MALQIPSLLLLAAVVVLMVLSSPGTEG). Residues 28 to 120 (GDSERHFVVQ…TEVPTSLRRL (93 aa)) are beta-1. The Extracellular segment spans residues 28 to 224 (GDSERHFVVQ…RAQSESARSK (197 aa)). Disulfide bonds link cysteine 42/cysteine 104 and cysteine 143/cysteine 199. Asparagine 46 carries N-linked (GlcNAc...) asparagine glycosylation. Residues 121-214 (EQPNVVISLS…SLKSPITVEW (94 aa)) form a beta-2 region. The Ig-like C1-type domain occupies 123–211 (PNVVISLSRT…EHPSLKSPIT (89 aa)). The connecting peptide stretch occupies residues 215–224 (RAQSESARSK). The helical transmembrane segment at 225-245 (MLSGIGGCVLGVIFLGLGLFI) threads the bilayer. Residues 246-263 (RHRSQKGPRGPPPAGLLQ) are Cytoplasmic-facing.

The protein belongs to the MHC class II family.

The protein resides in the membrane. The sequence is that of H-2 class II histocompatibility antigen, A-U beta chain from Mus musculus (Mouse).